The chain runs to 353 residues: tRNA N(3)-cytidine methyltransferase METTL2 (353 aa).

The disordered stretch occupies residues 1 to 37 (MAAPVVAADSPVIENMPETAGGATENSAEAQKRPQFG). Residues Trp-93, Tyr-97, Gly-165, Asp-190, Asp-216, and Ile-237 each coordinate S-adenosyl-L-methionine.

It belongs to the methyltransferase superfamily. METL family. In terms of assembly, monomer.

Its subcellular location is the cytoplasm. It catalyses the reaction cytidine(32) in tRNA(Thr) + S-adenosyl-L-methionine = N(3)-methylcytidine(32) in tRNA(Thr) + S-adenosyl-L-homocysteine + H(+). The catalysed reaction is cytidine(32) in tRNA(Arg)(CCU) + S-adenosyl-L-methionine = N(3)-methylcytidine(32) in tRNA(Arg)(CCU) + S-adenosyl-L-homocysteine + H(+). S-adenosyl-L-methionine-dependent methyltransferase that mediates N(3)-methylcytidine modification of residue 32 of the tRNA anticodon loop of tRNA(Thr)(UGU) and tRNA(Arg)(CCU). N(3)-methylcytidine methylation by mettl2a requires the N6-threonylcarbamoylation of tRNA (t6A37) by the EKC/KEOPS complex as prerequisite. This Danio rerio (Zebrafish) protein is tRNA N(3)-cytidine methyltransferase METTL2 (mettl2a).